Reading from the N-terminus, the 30-residue chain is Proteinase inhibitor CeKI (30 aa).

It belongs to the protease inhibitor I3 (leguminous Kunitz-type inhibitor) family.

Potent inhibitor of serine proteases plasma kallikrein, plasmin and coagulation factor XIIa. Weak inhibitor of serine proteases trypsin and coagulation factor Xa. Does not inhibit the serine proteases chymotrypsin, elastase or thrombin. Inhibits kinin release from HMW-kininogen by kallikrein in vitro. This chain is Proteinase inhibitor CeKI, found in Paubrasilia echinata (Pau Brasil).